Here is a 1118-residue protein sequence, read N- to C-terminus: Pleckstrin homology domain-containing family A member 7 (1118 aa).

2 WW domains span residues 8–41 and 53–86; these read DTLP…HPRT and SDLP…HPVT. The segment covering 100-113 has biased composition (basic and acidic residues); that stretch reads EEPHPHMSKPERNQ. The segment at 100-145 is disordered; that stretch reads EEPHPHMSKPERNQRPSSMVSETSTAGTTSTLEAKPGPKIVKSSSK. Polar residues predominate over residues 114 to 131; it reads RPSSMVSETSTAGTTSTL. The PH domain maps to 163-281; the sequence is PVVVRGWLHK…WVRAMNQAAQ (119 aa). Composition is skewed to basic and acidic residues over residues 334–355 and 434–443; these read FNRR…EGRR and HWTKAQKGDG. Disordered stretches follow at residues 334-512 and 528-629; these read FNRR…RRAH and QFRH…RRSM. A compositionally biased stretch (polar residues) spans 452–481; that stretch reads LPRQGPSQPLSFPENYQSLPKSTRHLSGSS. Over residues 494-512 the composition is skewed to basic and acidic residues; the sequence is YAQDRASHLKMSSEERRAH. Residues Ser-533, Ser-542, Ser-566, Ser-601, Ser-605, and Ser-609 each carry the phosphoserine modification. An interaction with CTNND1 region spans residues 535–693; it reads TAPIGAGSPE…AESDIDVKLS (159 aa). Residues 564–579 show a composition bias toward pro residues; the sequence is PPSPSDIPPPGPPRPF. The span at 586-602 shows a compositional bias: basic and acidic residues; it reads TPAERVTVKPPEQRRSV. A coiled-coil region spans residues 697–798; that stretch reads EQDRILQDLE…LQEQHRRAFF (102 aa). 2 disordered regions span residues 839–873 and 886–968; these read KTVP…VRTP and VPYR…EQGQ. Phosphoserine occurs at positions 857 and 864. Thr-867 carries the phosphothreonine modification. 3 positions are modified to phosphoserine: Ser-868, Ser-900, and Ser-904. Residues 930-939 show a composition bias toward pro residues; it reads DQPPAVPPLP. Over residues 955-966 the composition is skewed to basic and acidic residues; that stretch reads RQSDERKRDREQ. 2 positions are modified to phosphoserine: Ser-983 and Leu-990. The tract at residues 1003–1024 is disordered; that stretch reads GSESRYQTLPGRGLSGSTSRLQ. Residues 1064 to 1091 are a coiled coil; that stretch reads QRGKMSAEEQLERMKRHQKALVRERKRT.

Interacts with CAMSAP3 and CTNND1. Interacts (via WW domains) with TSPAN33 (via cytoplasmic domain) and with PDZD11; the interaction with TSPAN33 is dependent on PDZD11 being bound to PLEKHA7 and facilitates the docking of ADAM10 to zonula adherens through interaction of TSPAN33 with ADAM10. Expressed in kidney and lung (at protein level).

The protein localises to the cell junction. The protein resides in the adherens junction. Its subcellular location is the cytoplasm. It localises to the cytoskeleton. It is found in the microtubule organizing center. The protein localises to the centrosome. Required for zonula adherens biogenesis and maintenance. Acts via its interaction with CAMSAP3, which anchors microtubules at their minus-ends to zonula adherens, leading to the recruitment of KIFC3 kinesin to the junctional site. Mediates docking of ADAM10 to zonula adherens through a PDZD11-dependent interaction with the ADAM10-binding protein TSPAN33. The sequence is that of Pleckstrin homology domain-containing family A member 7 (Plekha7) from Mus musculus (Mouse).